The chain runs to 318 residues: Putative fimbrium tip subunit Fim1F (318 aa).

The N-terminal stretch at Met1 to Glu24 is a signal peptide. A propeptide spanning residues Val25 to Lys50 is cleaved from the precursor.

Belongs to the bacteroidetes fimbrillin superfamily. FimA/Mfa1 family. As to quaternary structure, may be part of the fimbrial tip.

It localises to the fimbrium. Functionally, putative component of the fimbrium tip. Fimbriae are filamentous appendages on the cell surface that mediate cell adhesion and biofilm formation. The sequence is that of Putative fimbrium tip subunit Fim1F from Parabacteroides distasonis (strain ATCC 8503 / DSM 20701 / CIP 104284 / JCM 5825 / NCTC 11152).